A 320-amino-acid chain; its full sequence is Solute carrier family 25 member 33 (320 aa).

Solcar repeat units lie at residues 9–118 (ENTL…AKEQ), 126–213 (NSNT…LKKC), and 231–315 (SGFF…IVYL). The next 6 helical transmembrane spans lie at 12–32 (LLHLFAGGCGGTVGAIFTCPL), 49–65 (VYYPQVHLGTISGAGMV), 121–141 (GIFVPNSNTVHILSAGSAAFV), 190–210 (LTASYAGISETIICFAIYESL), 233–253 (FFGLMAAAAVSKGCASCIAYP), and 298–318 (QIPNTAIVLSTYEFIVYLLGE).

The protein belongs to the mitochondrial carrier (TC 2.A.29) family.

It is found in the mitochondrion inner membrane. The enzyme catalyses UTP(in) + UDP(out) = UTP(out) + UDP(in). The catalysed reaction is dUTP(out) + UTP(in) = dUTP(in) + UTP(out). It catalyses the reaction 5-methyl-UTP(out) + UTP(in) = 5-methyl-UTP(in) + UTP(out). It carries out the reaction 5-methyl-UDP(out) + UTP(in) = 5-methyl-UDP(in) + UTP(out). The enzyme catalyses UTP(in) + CTP(out) = UTP(out) + CTP(in). The catalysed reaction is CDP(out) + UTP(in) = CDP(in) + UTP(out). It catalyses the reaction dCTP(out) + UTP(in) = dCTP(in) + UTP(out). It carries out the reaction dCDP(out) + UTP(in) = dCDP(in) + UTP(out). The enzyme catalyses UTP(in) + GTP(out) = UTP(out) + GTP(in). The catalysed reaction is UTP(in) + GDP(out) = UTP(out) + GDP(in). It catalyses the reaction dGTP(out) + UTP(in) = dGTP(in) + UTP(out). It carries out the reaction dGDP(out) + UTP(in) = dGDP(in) + UTP(out). The enzyme catalyses ITP(out) + UTP(in) = ITP(in) + UTP(out). In terms of biological role, mitochondrial transporter that imports/exports pyrimidine nucleotides into and from mitochondria. Selectively transports uridine, thymidine, guanosine, cytosine and inosine (deoxy)nucleoside di- and triphosphates by an antiport mechanism. May import (deoxy)nucleoside triphosphates in exchange for intramitochondrial (deoxy)nucleoside diphosphates, thus providing precursors necessary for de novo synthesis of mitochondrial DNA and RNA while exporting products of their catabolism. Participates in mitochondrial genome maintenance, regulation of mitochondrial membrane potential and mitochondrial respiration. Upon INS or IGF1 stimulation regulates cell growth and proliferation by controlling mitochondrial DNA replication and transcription, the ratio of mitochondria-to nuclear-encoded components of the electron transport chain resulting in control of mitochondrial ROS production. Participates in dendritic cell endocytosis and may associate with mitochondrial oxidative phosphorylation. The sequence is that of Solute carrier family 25 member 33 (Slc25a33) from Mus musculus (Mouse).